Consider the following 330-residue polypeptide: Ribosomal RNA small subunit methyltransferase C (330 aa).

This sequence belongs to the methyltransferase superfamily. RsmC family. As to quaternary structure, monomer.

It is found in the cytoplasm. It catalyses the reaction guanosine(1207) in 16S rRNA + S-adenosyl-L-methionine = N(2)-methylguanosine(1207) in 16S rRNA + S-adenosyl-L-homocysteine + H(+). In terms of biological role, specifically methylates the guanine in position 1207 of 16S rRNA in the 30S particle. This chain is Ribosomal RNA small subunit methyltransferase C, found in Haemophilus influenzae (strain PittGG).